We begin with the raw amino-acid sequence, 251 residues long: MKKAGLLFLVMIVIAVVAAGIGYWKLTGEESDTLRKIVLEQCLPNQQENQNPSPCAEVKPNAGYVVLKDRHGPLQYLLMPTYRINGTESPLLTDPSTPNFFWLAWQARDFMSQKYGQPVPDRAVSLAINSRTGRTQNHFHIHISCIRPDVREQLDNNLANISSRWLPMPGGLRGHEYLARRVTESELVQRSPFMMLAEEVPEAREHMGSYGLAMVRQSDNSFVLLATQRNLLTLNRASAEEIQDHQCEILR.

A helical transmembrane segment spans residues 4-24 (AGLLFLVMIVIAVVAAGIGYW).

It belongs to the Cdh family.

Its subcellular location is the cell inner membrane. The catalysed reaction is a CDP-1,2-diacyl-sn-glycerol + H2O = a 1,2-diacyl-sn-glycero-3-phosphate + CMP + 2 H(+). It functions in the pathway phospholipid metabolism; CDP-diacylglycerol degradation; phosphatidate from CDP-diacylglycerol: step 1/1. The polypeptide is CDP-diacylglycerol pyrophosphatase (Escherichia coli O81 (strain ED1a)).